Reading from the N-terminus, the 452-residue chain is Pup--protein ligase (452 aa).

Glu-9 provides a ligand contact to Mg(2+). Arg-53 is a binding site for ATP. Residue Tyr-55 coordinates Mg(2+). Catalysis depends on Asp-57, which acts as the Proton acceptor. Mg(2+) is bound at residue Glu-63. ATP-binding residues include Thr-66 and Trp-419.

It belongs to the Pup ligase/Pup deamidase family. Pup-conjugating enzyme subfamily. Pupylated at an undetermined lysine residue by the prokaryotic ubiquitin-like protein Pup, which leads to its degradation by the proteasome and thereby constitutes a negative auto-regulation.

The catalysed reaction is ATP + [prokaryotic ubiquitin-like protein]-L-glutamate + [protein]-L-lysine = ADP + phosphate + N(6)-([prokaryotic ubiquitin-like protein]-gamma-L-glutamyl)-[protein]-L-lysine.. It participates in protein degradation; proteasomal Pup-dependent pathway. Its pathway is protein modification; protein pupylation. Its function is as follows. Catalyzes the covalent attachment of the prokaryotic ubiquitin-like protein modifier Pup to the proteasomal substrate proteins, thereby targeting them for proteasomal degradation. This tagging system is termed pupylation. The ligation reaction likely involves the side-chain carboxylate of the C-terminal glutamate of Pup and the side-chain amino group of a substrate lysine. The polypeptide is Pup--protein ligase (pafA) (Mycolicibacterium smegmatis (strain ATCC 700084 / mc(2)155) (Mycobacterium smegmatis)).